We begin with the raw amino-acid sequence, 247 residues long: Cell division protein ZapD (247 aa).

The protein belongs to the ZapD family. In terms of assembly, interacts with FtsZ.

The protein resides in the cytoplasm. Its function is as follows. Cell division factor that enhances FtsZ-ring assembly. Directly interacts with FtsZ and promotes bundling of FtsZ protofilaments, with a reduction in FtsZ GTPase activity. The sequence is that of Cell division protein ZapD from Klebsiella pneumoniae subsp. pneumoniae (strain ATCC 700721 / MGH 78578).